Here is a 633-residue protein sequence, read N- to C-terminus: Pesticidal crystal protein Cry2Ad (633 aa).

It belongs to the delta endotoxin family.

Functionally, promotes colloidosmotic lysis by binding to the midgut epithelial cells of insects. In Bacillus thuringiensis, this protein is Pesticidal crystal protein Cry2Ad (cry2Ad).